The chain runs to 255 residues: Small ribosomal subunit protein eS4 (255 aa).

The 64-residue stretch at 44-107 folds into the S4 RNA-binding domain; sequence IPLLILVRDV…DEYYRMIPYP (64 aa).

It belongs to the eukaryotic ribosomal protein eS4 family.

This chain is Small ribosomal subunit protein eS4, found in Ignicoccus hospitalis (strain KIN4/I / DSM 18386 / JCM 14125).